The chain runs to 451 residues: Potassium/sodium uptake protein NtpJ (451 aa).

Helical transmembrane passes span 18–38, 46–66, 78–98, 133–153, 162–182, 192–212, 230–250, 293–313, 350–370, 380–400, and 410–430; these read IAAG…LPFF, HFID…LTTL, FLIM…PILF, ILKF…VVFI, IWFS…DLLG, VYLI…FIVW, VALS…LITE, LILT…AGGL, ALTL…VLSV, IEYI…TMGL, and LVII…VFSL.

Belongs to the TrkH potassium transport family.

Its subcellular location is the cell membrane. Functionally, mediates electrogenic transport of potassium as well as sodium. Acts probably as a potassium-sodium cotransporter. Major sodium reentry pathway at high pH values. The sequence is that of Potassium/sodium uptake protein NtpJ (ntpJ) from Enterococcus hirae (strain ATCC 9790 / DSM 20160 / JCM 8729 / LMG 6399 / NBRC 3181 / NCIMB 6459 / NCDO 1258 / NCTC 12367 / WDCM 00089 / R).